A 61-amino-acid chain; its full sequence is Probable tautomerase LMOf2365_2536 (61 aa).

Residue P2 is the Proton acceptor; via imino nitrogen of the active site.

This sequence belongs to the 4-oxalocrotonate tautomerase family.

This chain is Probable tautomerase LMOf2365_2536, found in Listeria monocytogenes serotype 4b (strain F2365).